The following is a 127-amino-acid chain: Major sperm protein 19/31/40/45/50/51/53/59/61/65/81/113/142 (127 aa).

An N-acetylalanine modification is found at Ala2. The 118-residue stretch at 9–126 folds into the MSP domain; it reads DIQTQPGTKI…RRKNLPIEYN (118 aa).

As to quaternary structure, helical subfilaments are built from MSP dimers; filaments are formed from two subfilaments coiling round one another; and filaments themselves supercoil to produce bundles. As to expression, sperm.

Its subcellular location is the cell projection. The protein resides in the pseudopodium. It localises to the cytoplasm. It is found in the cytoskeleton. Functionally, central component in molecular interactions underlying sperm crawling. Forms an extensive filament system that extends from sperm villipoda, along the leading edge of the pseudopod. In Caenorhabditis elegans, this protein is Major sperm protein 19/31/40/45/50/51/53/59/61/65/81/113/142 (msp-19).